The primary structure comprises 258 residues: 5-oxoprolinase subunit A 2 (258 aa).

The protein belongs to the LamB/PxpA family. In terms of assembly, forms a complex composed of PxpA, PxpB and PxpC.

It catalyses the reaction 5-oxo-L-proline + ATP + 2 H2O = L-glutamate + ADP + phosphate + H(+). Its function is as follows. Catalyzes the cleavage of 5-oxoproline to form L-glutamate coupled to the hydrolysis of ATP to ADP and inorganic phosphate. This is 5-oxoprolinase subunit A 2 from Pseudomonas putida (strain ATCC 47054 / DSM 6125 / CFBP 8728 / NCIMB 11950 / KT2440).